Reading from the N-terminus, the 530-residue chain is Histone-arginine methyltransferase CARMER (530 aa).

The region spanning 141–450 is the SAM-dependent MTase PRMT-type domain; that stretch reads ASQYFQFYGY…QSYDVTIDLH (310 aa). S-adenosyl-L-methionine is bound by residues Q154, R163, G187, E209, E238, and T266. Residue R501 is modified to Asymmetric dimethylarginine; by autocatalysis.

Belongs to the class I-like SAM-binding methyltransferase superfamily. Protein arginine N-methyltransferase family. In terms of assembly, homodimer. In terms of processing, the dimethylated protein is the major form.

It localises to the cytoplasm. The protein resides in the nucleus. It catalyses the reaction L-arginyl-[protein] + 2 S-adenosyl-L-methionine = N(omega),N(omega)-dimethyl-L-arginyl-[protein] + 2 S-adenosyl-L-homocysteine + 2 H(+). In terms of biological role, methylates (mono- and asymmetric dimethylation) the guanidino nitrogens of arginyl residues in proteins. May methylate histone H3 at 'Arg-17' and activate transcription via chromatin remodeling. This chain is Histone-arginine methyltransferase CARMER (Art4), found in Drosophila simulans (Fruit fly).